Here is a 227-residue protein sequence, read N- to C-terminus: Large ribosomal subunit protein uL3 (227 aa).

Q151 carries the N5-methylglutamine modification.

The protein belongs to the universal ribosomal protein uL3 family. As to quaternary structure, part of the 50S ribosomal subunit. Forms a cluster with proteins L14 and L19. In terms of processing, methylated by PrmB.

Its function is as follows. One of the primary rRNA binding proteins, it binds directly near the 3'-end of the 23S rRNA, where it nucleates assembly of the 50S subunit. This Gluconobacter oxydans (strain 621H) (Gluconobacter suboxydans) protein is Large ribosomal subunit protein uL3.